We begin with the raw amino-acid sequence, 298 residues long: Cation-efflux pump FieF (298 aa).

Residues 24–44 (LLIKIFAWWYTGSVSILAALV) form a helical membrane-spanning segment. Residues aspartate 45 and aspartate 49 each contribute to the Zn(2+) site. 2 helical membrane passes run 80–100 (SLAA…LTSI) and 112–132 (PGVG…LVTF). 2 residues coordinate Zn(2+): histidine 151 and aspartate 155. 2 consecutive transmembrane segments (helical) span residues 154-174 (SDVM…YGWH) and 176-196 (ADAL…LRMG).

Belongs to the cation diffusion facilitator (CDF) transporter (TC 2.A.4) family. FieF subfamily. As to quaternary structure, homodimer.

It localises to the cell inner membrane. It carries out the reaction Zn(2+)(in) + H(+)(out) = Zn(2+)(out) + H(+)(in). It catalyses the reaction Cd(2+)(in) + H(+)(out) = Cd(2+)(out) + H(+)(in). The enzyme catalyses Fe(2+)(in) + H(+)(out) = Fe(2+)(out) + H(+)(in). Divalent metal cation transporter which exports Zn(2+), Cd(2+) and possibly Fe(2+). May be involved in zinc and iron detoxification by efflux. This chain is Cation-efflux pump FieF, found in Salmonella typhi.